We begin with the raw amino-acid sequence, 293 residues long: Lipoyl synthase (293 aa).

C38, C43, C49, C64, C68, C71, and S277 together coordinate [4Fe-4S] cluster. In terms of domain architecture, Radical SAM core spans 50 to 266 (WSRGTATFLL…STIAKNAGIR (217 aa)).

This sequence belongs to the radical SAM superfamily. Lipoyl synthase family. [4Fe-4S] cluster is required as a cofactor.

The protein resides in the cytoplasm. The enzyme catalyses [[Fe-S] cluster scaffold protein carrying a second [4Fe-4S](2+) cluster] + N(6)-octanoyl-L-lysyl-[protein] + 2 oxidized [2Fe-2S]-[ferredoxin] + 2 S-adenosyl-L-methionine + 4 H(+) = [[Fe-S] cluster scaffold protein] + N(6)-[(R)-dihydrolipoyl]-L-lysyl-[protein] + 4 Fe(3+) + 2 hydrogen sulfide + 2 5'-deoxyadenosine + 2 L-methionine + 2 reduced [2Fe-2S]-[ferredoxin]. It participates in protein modification; protein lipoylation via endogenous pathway; protein N(6)-(lipoyl)lysine from octanoyl-[acyl-carrier-protein]: step 2/2. Functionally, catalyzes the radical-mediated insertion of two sulfur atoms into the C-6 and C-8 positions of the octanoyl moiety bound to the lipoyl domains of lipoate-dependent enzymes, thereby converting the octanoylated domains into lipoylated derivatives. This Chlorobium chlorochromatii (strain CaD3) protein is Lipoyl synthase.